We begin with the raw amino-acid sequence, 429 residues long: Prenyltransferase okaC (429 aa).

The dimethylallyl diphosphate site is built by Arg-101, Lys-189, Tyr-191, Lys-257, Tyr-259, Tyr-342, Tyr-406, and Tyr-410.

The protein belongs to the tryptophan dimethylallyltransferase family.

It catalyses the reaction cyclo(L-Trp-L-Trp) + 2 dimethylallyl diphosphate = cyclo(N(8)-(alpha,alpha-dimethylallyl)-L-Trp-6a-(alpha,alpha-dimethylallyl)-L-Trp) + 2 diphosphate. It functions in the pathway alkaloid biosynthesis. Its function is as follows. Prenyltransferase; part of the gene cluster that mediates the biosynthesis of okaramine B, a prenylated indole alkaloid that possesses an unusual octacyclic ring system, including a four-membered azetidine ring and an eight-membered azocine ring, and that exhibits insecticidal activity against silkworm larvae. Within the pathway, okaC performs asymmetric reverse prenylation of cyclo(L-Trp-L-Trp) at N-1 and C-2' of the indole ring to produce the cyclic prenylated tryptophan dimer cyclo(N8-(alpha,alpha-dimethylallyl)-L-Trp-6a-(alpha,alpha-dime-thylallyl)-L-Trp). The biosynthesis begins with the NRPS okaA that condenses two tryptophan molecules into cyclo(L-Trp-L-Trp). Prenylation by the prenyltransferase okaC then leads to the formation of cyclo(N8-(alpha,alpha-dimethylallyl)-L-Trp-6a-(alpha,alpha-dime-thylallyl)-L-Trp). This is followed by indole 2,3-epoxidation by the FAD-dependent monooxygenase okaB to facilitate the formation of the hexahydropyrrolo[2,3-b]indole (HPI) moiety of okaramine C. The cytochrome P450 monooxygenase okaD then likely catalyzes formation of the eight-membered ring of okaramine A. The dioxygenase okaE further forms the unusual 2-dimethyl-3-methyl-azetidine ring to yield 12-deshydroxyl okaramine E, as well as the hydroxylation of 12-deshydroxyl okaramine E to produce okaramine E. The cytochrome P450 monoxygenase okaG converts 12-deshydroxyl okaramine E into 3-desmethyl okaramine B which is further methylated by the methyltransferase okaF into okaramine B. In a shunt pathway, okaG and okaF together are also able to convert okaramine E into okaramine D. Okaramine H is produced by nonenzymatic conversion from okaramine A. This Penicillium ochrochloron protein is Prenyltransferase okaC.